A 678-amino-acid polypeptide reads, in one-letter code: DNA ligase (678 aa).

Residues 47-51 (DSDYD), 96-97 (SL), and E122 each bind NAD(+). K124 acts as the N6-AMP-lysine intermediate in catalysis. Positions 145, 182, 300, and 324 each coordinate NAD(+). C418, C421, C436, and C442 together coordinate Zn(2+). Positions 602 to 678 (AYNESFTGKT…ILEDNLKDLL (77 aa)) constitute a BRCT domain.

The protein belongs to the NAD-dependent DNA ligase family. LigA subfamily. The cofactor is Mg(2+). Mn(2+) serves as cofactor.

It catalyses the reaction NAD(+) + (deoxyribonucleotide)n-3'-hydroxyl + 5'-phospho-(deoxyribonucleotide)m = (deoxyribonucleotide)n+m + AMP + beta-nicotinamide D-nucleotide.. DNA ligase that catalyzes the formation of phosphodiester linkages between 5'-phosphoryl and 3'-hydroxyl groups in double-stranded DNA using NAD as a coenzyme and as the energy source for the reaction. It is essential for DNA replication and repair of damaged DNA. The polypeptide is DNA ligase (Francisella tularensis subsp. novicida (strain U112)).